The sequence spans 450 residues: Glycerol dehydrogenase 1 (450 aa).

NAD(+) is bound by residues D99, 155–159 (GKTMD), and 177–180 (TTAS). Position 182 (D182) interacts with substrate. Residues S186, L188, and Y192 each coordinate NAD(+). Substrate contacts are provided by D232, H315, and H333. Residues D232, H315, and H333 each contribute to the Zn(2+) site.

It belongs to the iron-containing alcohol dehydrogenase family. Requires Zn(2+) as cofactor.

Its subcellular location is the mitochondrion. It carries out the reaction glycerol + NAD(+) = dihydroxyacetone + NADH + H(+). The protein operates within polyol metabolism; glycerol fermentation; glycerone phosphate from glycerol (oxidative route): step 1/2. Functionally, glycerol dehydrogenase involved in the assimilation of glycerol. This Schizosaccharomyces pombe (strain 972 / ATCC 24843) (Fission yeast) protein is Glycerol dehydrogenase 1 (gld1).